A 2197-amino-acid polypeptide reads, in one-letter code: RNA1 polyprotein (2197 aa).

At 621-1167 (GLTDVFGVPL…YDWVYANGGK (547 aa)) the chain is on the cytoplasmic side. The SF3 helicase domain occupies 766 to 933 (VKRLSDLHKR…EGVAYNPSDP (168 aa)). 796–803 (GGPRCGKS) serves as a coordination point for ATP. Residues 1168–1188 (LLLVLAAVILILFFGSACIKL) form a helical membrane-spanning segment. The Lumenal segment spans residues 1189-1212 (MQAIFCGAAGGTVSMAAVGKMTVQ). A glycan (N-linked (GlcNAc...) asparagine; by host) is linked at Asn-1228. The Peptidase C3 domain maps to 1243–1475 (LAEAQFNESH…MPRYISHASF (233 aa)). Catalysis depends on for picornain 3C-like protease activity residues His-1283, Glu-1331, and Cys-1433. The RdRp catalytic domain occupies 1765–1888 (SVALNCDYSR…SIKPDTMKYF (124 aa)).

This sequence belongs to the nepoviruses RNA1 polyprotein family. Specific enzymatic cleavages by picornain 3C-like protease in vivo yield mature proteins. Picornain 3C-like protease is autocatalytically processed. NTB exists as NTB-VPg polyprotein as well as NTB mature protein. Post-translationally, VPg is uridylylated by the polymerase and is covalently linked to the 5'-end of genomic RNA. This uridylylated form acts as a nucleotide-peptide primer for the polymerase.

The protein resides in the host endoplasmic reticulum lumen. The protein localises to the host endoplasmic reticulum membrane. The enzyme catalyses RNA(n) + a ribonucleoside 5'-triphosphate = RNA(n+1) + diphosphate. Picornain 3C-like protease is a thiol protease that cleaves at Gln-|-Gly or Gln-|-Ser sites in the P1 and P2 polyproteins. Its function is as follows. The VPg-NTB polyprotein may act as a membrane-anchor for the replication complex. The chain is RNA1 polyprotein from Tomato ringspot virus (isolate raspberry) (ToRSV).